The chain runs to 169 residues: ATP synthase subunit b (169 aa).

Residues 14–34 traverse the membrane as a helical segment; the sequence is TFLAMLISFLILVFILQQVAF.

It belongs to the ATPase B chain family. As to quaternary structure, F-type ATPases have 2 components, F(1) - the catalytic core - and F(0) - the membrane proton channel. F(1) has five subunits: alpha(3), beta(3), gamma(1), delta(1), epsilon(1). F(0) has four main subunits: a(1), b(2) and c(10-14). The alpha and beta chains form an alternating ring which encloses part of the gamma chain. F(1) is attached to F(0) by a central stalk formed by the gamma and epsilon chains, while a peripheral stalk is formed by the delta and b chains.

It is found in the cell membrane. Functionally, f(1)F(0) ATP synthase produces ATP from ADP in the presence of a proton or sodium gradient. F-type ATPases consist of two structural domains, F(1) containing the extramembraneous catalytic core and F(0) containing the membrane proton channel, linked together by a central stalk and a peripheral stalk. During catalysis, ATP synthesis in the catalytic domain of F(1) is coupled via a rotary mechanism of the central stalk subunits to proton translocation. Component of the F(0) channel, it forms part of the peripheral stalk, linking F(1) to F(0). This Heliobacterium modesticaldum (strain ATCC 51547 / Ice1) protein is ATP synthase subunit b.